The chain runs to 269 residues: Putative pyruvate, phosphate dikinase regulatory protein (269 aa).

ADP is bound at residue 147–154; the sequence is GLSRTSKT.

The protein belongs to the pyruvate, phosphate/water dikinase regulatory protein family. PDRP subfamily.

The enzyme catalyses N(tele)-phospho-L-histidyl/L-threonyl-[pyruvate, phosphate dikinase] + ADP = N(tele)-phospho-L-histidyl/O-phospho-L-threonyl-[pyruvate, phosphate dikinase] + AMP + H(+). The catalysed reaction is N(tele)-phospho-L-histidyl/O-phospho-L-threonyl-[pyruvate, phosphate dikinase] + phosphate + H(+) = N(tele)-phospho-L-histidyl/L-threonyl-[pyruvate, phosphate dikinase] + diphosphate. Functionally, bifunctional serine/threonine kinase and phosphorylase involved in the regulation of the pyruvate, phosphate dikinase (PPDK) by catalyzing its phosphorylation/dephosphorylation. In Clostridium botulinum (strain 657 / Type Ba4), this protein is Putative pyruvate, phosphate dikinase regulatory protein.